The sequence spans 80 residues: U-actitoxin-Avd9b (80 aa).

An N-terminal signal peptide occupies residues 1–20 (MNLKVLAVFVLCAILVVVTA). The propeptide occupies 21 to 39 (ERRGTETGGYKKDTLQDLK). Residues 45–80 (CFDRYREAACTSDNIRLLCKTSAKYQINCKKSCGLC) form the ShKT domain. 3 disulfides stabilise this stretch: C45–C80, C54–C73, and C63–C77. Residues 68-69 (KY) are crucial for binding to potassium channels.

Belongs to the sea anemone type 1 potassium channel toxin family. Type 1b subfamily.

The protein resides in the secreted. Its subcellular location is the nematocyst. Its function is as follows. Inhibits voltage-gated potassium channels (Kv1/KCNA). The sequence is that of U-actitoxin-Avd9b from Anemonia viridis (Snakelocks anemone).